Reading from the N-terminus, the 370-residue chain is Notoamide biosynthesis cluster protein J (370 aa).

An N-terminal signal peptide occupies residues Met1–Ala22. Asn159, Asn167, Asn192, Asn235, Asn282, Asn340, and Asn346 each carry an N-linked (GlcNAc...) asparagine glycan.

Functionally, part of the gene cluster that mediates the biosynthesis of notoamide, a fungal indole alkaloid that belongs to a family of natural products containing a characteristic bicyclo[2.2.2]diazaoctane core. The first step of notoamide biosynthesis involves coupling of L-proline and L-tryptophan by the bimodular NRPS notE, to produce cyclo-L-tryptophan-L-proline called brevianamide F. The reverse prenyltransferase notF then acts as a deoxybrevianamide E synthase and converts brevianamide F to deoxybrevianamide E via reverse prenylation at C-2 of the indole ring leading to the bicyclo[2.2.2]diazaoctane core. Deoxybrevianamide E is further hydroxylated at C-6 of the indole ring, likely catalyzed by the cytochrome P450 monooxygenase notG, to yield 6-hydroxy-deoxybrevianamide E. 6-hydroxy-deoxybrevianamide E is a specific substrate of the prenyltransferase notC for normal prenylation at C-7 to produce 6-hydroxy-7-prenyl-deoxybrevianamide, also called notoamide S. As the proposed pivotal branching point in notoamide biosynthesis, notoamide S can be diverted to notoamide E through an oxidative pyran ring closure putatively catalyzed by either notH cytochrome P450 monooxygenase or the notD FAD-linked oxidoreductase. This step would be followed by an indole 2,3-epoxidation-initiated pinacol-like rearrangement catalyzed by the notB FAD-dependent monooxygenase leading to the formation of notoamide C and notoamide D. On the other hand notoamide S is converted to notoamide T by notH (or notD), a bifunctional oxidase that also functions as the intramolecular Diels-Alderase responsible for generation of (+)-notoamide T. To generate antipodal (-)-notoaminide T, notH' (or notD') in Aspergillus versicolor is expected to catalyze a Diels-Alder reaction leading to the opposite stereochemistry. The remaining oxidoreductase notD (or notH) likely catalyzes the oxidative pyran ring formation to yield (+)-stephacidin A. The FAD-dependent monooxygenase notI is highly similar to notB and is predicted to catalyze a similar conversion from (+)-stephacidin A to (-)-notoamide B via the 2,3-epoxidation of (+)-stephacidin A followed by a pinacol-type rearrangement. Finally, it remains unclear which enzyme could be responsible for the final hydroxylation steps leading to notoamide A and sclerotiamide. The function of notJ in the notoamide biosynthesis has not been determined yet. The protein is Notoamide biosynthesis cluster protein J of Aspergillus sp. (strain MF297-2).